Here is a 286-residue protein sequence, read N- to C-terminus: Flagellar filament 31.3 kDa core protein (286 aa).

It belongs to the bacterial flagellin family. The core of the flagellum consists of several antigenically related polypeptides. In terms of processing, glycosylated. Glycosylation is not essential for motility.

It localises to the periplasmic flagellum. The protein localises to the periplasm. Functionally, component of the core of the flagella. The polypeptide is Flagellar filament 31.3 kDa core protein (flaB2) (Treponema maltophilum).